We begin with the raw amino-acid sequence, 60 residues long: Short neurotoxin C (60 aa).

Disulfide bonds link C3/C22, C17/C39, C41/C52, and C53/C58.

This sequence belongs to the three-finger toxin family. Short-chain subfamily. Type I alpha-neurotoxin sub-subfamily. Expressed by the venom gland.

The protein resides in the secreted. Binds to muscle nicotinic acetylcholine receptor (nAChR) and inhibit acetylcholine from binding to the receptor, thereby impairing neuromuscular transmission. The sequence is that of Short neurotoxin C from Aipysurus laevis (Olive sea snake).